A 320-amino-acid polypeptide reads, in one-letter code: NAC domain-containing protein 20 (320 aa).

Residues 14-170 (LPPGFRFHPT…DWAVCRIFHK (157 aa)) enclose the NAC domain. The DNA-binding element occupies 114–176 (IGMKKTLVFY…IFHKSSGIKK (63 aa)).

As to quaternary structure, forms homodimers. Forms heterodimers with NAC26. As to expression, expressed in developing seeds. Expressed in developing endosperm.

The protein resides in the nucleus. It is found in the endoplasmic reticulum. Transcription factor that acts redundantly with NAC26 to regulate the expression of genes involved in the biosynthesis of starch and storage proteins in grain. Directly binds to the promoters of starch synthase 1 (SS1), pullulanase (PUL), glutelin A1 (GLUA1), glutelins B4 and B5 (GLUB4 and GLUB5), alpha-globulin and 16 kDa prolamin, and activates their expression. In Oryza sativa subsp. japonica (Rice), this protein is NAC domain-containing protein 20.